The chain runs to 187 residues: MVRPLNCIVAVSQNMGIGKNGDLPWPLLRNEFKYFQRMTTTSSVEGKQNLVIMGRKTWFSIPEKNRPLKDRINIVLSRELKEPPQGAHFLAKSLDDALKLIEQPELASKVDMVWVVGGSSVYQEAMNQPGHLRLFVTRIMQEFESDTFFPEIDLEKYKLLPEYPGVLSEIQEEKGIKYKFEVYEKKD.

Positions 4 to 185 constitute a DHFR domain; that stretch reads PLNCIVAVSQ…IKYKFEVYEK (182 aa). NADP(+) contacts are provided by residues Ala10 and 16–22; that span reads GIGKNGD. 31–36 is a substrate binding site; sequence EFKYFQ. The residue at position 33 (Lys33) is an N6-acetyllysine; alternate. N6-succinyllysine; alternate is present on Lys33. An NADP(+)-binding site is contributed by 55-57; that stretch reads RKT. Arg71 is a substrate binding site. Residues 77–79 and 117–124 each bind NADP(+); these read SRE and GGSSVYQE.

The protein belongs to the dihydrofolate reductase family. In terms of assembly, homodimer.

Its subcellular location is the mitochondrion. It localises to the cytoplasm. The enzyme catalyses (6S)-5,6,7,8-tetrahydrofolate + NADP(+) = 7,8-dihydrofolate + NADPH + H(+). It participates in cofactor biosynthesis; tetrahydrofolate biosynthesis; 5,6,7,8-tetrahydrofolate from 7,8-dihydrofolate: step 1/1. Functionally, key enzyme in folate metabolism. Contributes to the de novo mitochondrial thymidylate biosynthesis pathway. Catalyzes an essential reaction for de novo glycine and purine synthesis, and for DNA precursor synthesis. Binds its own mRNA. This Rattus norvegicus (Rat) protein is Dihydrofolate reductase (Dhfr).